Reading from the N-terminus, the 362-residue chain is MATKKLLWVVLSFSLVLGVANSFDFHDKDLASEESLWDLYERWRSHHTVSRSLGEKHKRFNVFKANLMHVHNTNKMDKPYKLKLNKFADMTNHEFRSTYAGSKVNHPRMFRGTPHENGAFMYEKVVSVPPSVDWRKKGAVTDVKDQGQCGSCWAFSTVVAVEGINQIKTNKLVALSEQELVDCDKEENQGCNGGLMESAFEFIKQKGGITTESNYPYKAQEGTCDASKVNDLAVSIDGHENVPANDEDALLKAVANQPVSVAIDAGGSDFQFYSEGVFTGDCSTDLNHGVAIVGYGTTVDGTNYWIVRNSWGPEWGEHGYIRMQRNISKKEGLCGIAMLPSYPIKNSSDNPTGSFSSPKDEL.

The first 20 residues, 1 to 20 (MATKKLLWVVLSFSLVLGVA), serve as a signal peptide directing secretion. The propeptide at 21–131 (NSFDFHDKDL…YEKVVSVPPS (111 aa)) is activation peptide. 3 cysteine pairs are disulfide-bonded: Cys149–Cys191, Cys183–Cys224, and Cys282–Cys334. Cys152 is a catalytic residue. Active-site residues include His288 and Asn309. Asn326 and Asn346 each carry an N-linked (GlcNAc...) asparagine glycan. The short motif at 359 to 362 (KDEL) is the Prevents secretion from ER element.

It belongs to the peptidase C1 family. In terms of assembly, monomer.

The protein resides in the endoplasmic reticulum lumen. Its function is as follows. Thought to be involved in the hydrolysis of stored seed proteins. In Phaseolus vulgaris (Kidney bean), this protein is Vignain.